Consider the following 218-residue polypeptide: Probable nicotinate-nucleotide adenylyltransferase (218 aa).

It belongs to the NadD family.

The catalysed reaction is nicotinate beta-D-ribonucleotide + ATP + H(+) = deamido-NAD(+) + diphosphate. The protein operates within cofactor biosynthesis; NAD(+) biosynthesis; deamido-NAD(+) from nicotinate D-ribonucleotide: step 1/1. Functionally, catalyzes the reversible adenylation of nicotinate mononucleotide (NaMN) to nicotinic acid adenine dinucleotide (NaAD). The protein is Probable nicotinate-nucleotide adenylyltransferase of Corynebacterium glutamicum (strain ATCC 13032 / DSM 20300 / JCM 1318 / BCRC 11384 / CCUG 27702 / LMG 3730 / NBRC 12168 / NCIMB 10025 / NRRL B-2784 / 534).